The primary structure comprises 459 residues: Cysteine--tRNA ligase (459 aa).

Cys-28 is a binding site for Zn(2+). Residues 30-40 (VTIYDLCHIGH) carry the 'HIGH' region motif. Positions 209, 234, and 238 each coordinate Zn(2+). The short motif at 266-270 (KMSKS) is the 'KMSKS' region element. Position 269 (Lys-269) interacts with ATP.

It belongs to the class-I aminoacyl-tRNA synthetase family. In terms of assembly, monomer. Zn(2+) is required as a cofactor.

It localises to the cytoplasm. It carries out the reaction tRNA(Cys) + L-cysteine + ATP = L-cysteinyl-tRNA(Cys) + AMP + diphosphate. This is Cysteine--tRNA ligase from Shewanella baltica (strain OS195).